A 410-amino-acid chain; its full sequence is LL-diaminopimelate aminotransferase (410 aa).

The substrate site is built by Tyr-15 and Gly-42. Residues Tyr-72, 108 to 109 (AK), Tyr-132, Asn-187, Tyr-218, and 246 to 248 (SFS) contribute to the pyridoxal 5'-phosphate site. Lys-109, Tyr-132, and Asn-187 together coordinate substrate. Lys-249 carries the post-translational modification N6-(pyridoxal phosphate)lysine. Pyridoxal 5'-phosphate is bound by residues Arg-257 and Asn-292. Substrate-binding residues include Asn-292 and Arg-388.

The protein belongs to the class-I pyridoxal-phosphate-dependent aminotransferase family. LL-diaminopimelate aminotransferase subfamily. In terms of assembly, homodimer. It depends on pyridoxal 5'-phosphate as a cofactor.

The catalysed reaction is (2S,6S)-2,6-diaminopimelate + 2-oxoglutarate = (S)-2,3,4,5-tetrahydrodipicolinate + L-glutamate + H2O + H(+). It functions in the pathway amino-acid biosynthesis; L-lysine biosynthesis via DAP pathway; LL-2,6-diaminopimelate from (S)-tetrahydrodipicolinate (aminotransferase route): step 1/1. Its function is as follows. Involved in the synthesis of meso-diaminopimelate (m-DAP or DL-DAP), required for both lysine and peptidoglycan biosynthesis. Catalyzes the direct conversion of tetrahydrodipicolinate to LL-diaminopimelate. The sequence is that of LL-diaminopimelate aminotransferase from Picosynechococcus sp. (strain ATCC 27264 / PCC 7002 / PR-6) (Agmenellum quadruplicatum).